Consider the following 275-residue polypeptide: Elongation factor Ts (275 aa).

The segment at 76 to 79 (TDFV) is involved in Mg(2+) ion dislocation from EF-Tu.

Belongs to the EF-Ts family.

It localises to the cytoplasm. Functionally, associates with the EF-Tu.GDP complex and induces the exchange of GDP to GTP. It remains bound to the aminoacyl-tRNA.EF-Tu.GTP complex up to the GTP hydrolysis stage on the ribosome. This chain is Elongation factor Ts, found in Rhodococcus opacus (strain B4).